The following is a 105-amino-acid chain: DNA-directed RNA polymerase subunit omega (105 aa).

It belongs to the RNA polymerase subunit omega family. The RNAP catalytic core consists of 2 alpha, 1 beta, 1 beta' and 1 omega subunit. When a sigma factor is associated with the core the holoenzyme is formed, which can initiate transcription.

The catalysed reaction is RNA(n) + a ribonucleoside 5'-triphosphate = RNA(n+1) + diphosphate. In terms of biological role, promotes RNA polymerase assembly. Latches the N- and C-terminal regions of the beta' subunit thereby facilitating its interaction with the beta and alpha subunits. The protein is DNA-directed RNA polymerase subunit omega of Streptococcus uberis (strain ATCC BAA-854 / 0140J).